A 329-amino-acid chain; its full sequence is DNA-directed RNA polymerase subunit alpha (329 aa).

Positions 1 to 235 are alpha N-terminal domain (alpha-NTD); the sequence is MQGSVTEFLK…EQLEAFVDLR (235 aa). The tract at residues 249–329 is alpha C-terminal domain (alpha-CTD); it reads FDPILLRPVD…NWPPASIADE (81 aa).

The protein belongs to the RNA polymerase alpha chain family. As to quaternary structure, homodimer. The RNAP catalytic core consists of 2 alpha, 1 beta, 1 beta' and 1 omega subunit. When a sigma factor is associated with the core the holoenzyme is formed, which can initiate transcription.

The enzyme catalyses RNA(n) + a ribonucleoside 5'-triphosphate = RNA(n+1) + diphosphate. Its function is as follows. DNA-dependent RNA polymerase catalyzes the transcription of DNA into RNA using the four ribonucleoside triphosphates as substrates. This Shigella dysenteriae serotype 1 (strain Sd197) protein is DNA-directed RNA polymerase subunit alpha.